The sequence spans 150 residues: Peptide methionine sulfoxide reductase MsrB (150 aa).

Residues 9 to 132 form the MsrB domain; that stretch reads EAELKRTLTK…NSAALKFIPF (124 aa). Cys121 acts as the Nucleophile in catalysis.

It belongs to the MsrB Met sulfoxide reductase family.

The enzyme catalyses L-methionyl-[protein] + [thioredoxin]-disulfide + H2O = L-methionyl-(R)-S-oxide-[protein] + [thioredoxin]-dithiol. The sequence is that of Peptide methionine sulfoxide reductase MsrB from Mycoplasma genitalium (strain ATCC 33530 / DSM 19775 / NCTC 10195 / G37) (Mycoplasmoides genitalium).